The sequence spans 535 residues: T-complex protein 1 subunit beta (535 aa).

Ala2 bears the N-acetylalanine mark. Residue Ser3 is modified to Phosphoserine. N6-acetyllysine is present on Lys13. Gly44 contributes to the ADP binding site. ATP is bound at residue Gly44. A Phosphoserine modification is found at Ser60. Residue Asp97 participates in Mg(2+) binding. 4 residues coordinate ADP: Gly98, Thr99, Thr100, and Ser101. ATP is bound by residues Gly98, Thr99, and Thr100. Lys154 carries the N6-acetyllysine modification. Ser168 and Ser169 together coordinate ADP. N6-acetyllysine is present on Lys181. Residue Lys248 forms a Glycyl lysine isopeptide (Lys-Gly) (interchain with G-Cter in SUMO2) linkage. Residue Ser260 is modified to Phosphoserine. Residue Thr261 is modified to Phosphothreonine. ADP is bound by residues Gly410, Glu495, and Lys500. ATP-binding residues include Glu495 and Lys500.

Belongs to the TCP-1 chaperonin family. In terms of assembly, component of the chaperonin-containing T-complex (TRiC), a hexadecamer composed of two identical back-to-back stacked rings enclosing a protein folding chamber. Each ring is made up of eight different subunits: TCP1/CCT1, CCT2, CCT3, CCT4, CCT5, CCT6A/CCT6, CCT7, CCT8. Interacts with PACRG. Interacts with FLCN. Interacts with DLEC1. Interacts with SVEP1.

It localises to the cytoplasm. It carries out the reaction ATP + H2O = ADP + phosphate + H(+). Its function is as follows. Component of the chaperonin-containing T-complex (TRiC), a molecular chaperone complex that assists the folding of actin, tubulin and other proteins upon ATP hydrolysis. The TRiC complex mediates the folding of WRAP53/TCAB1, thereby regulating telomere maintenance. As part of the TRiC complex may play a role in the assembly of BBSome, a complex involved in ciliogenesis regulating transports vesicles to the cilia. The protein is T-complex protein 1 subunit beta (Cct2) of Rattus norvegicus (Rat).